We begin with the raw amino-acid sequence, 496 residues long: Cytochrome P450 71D95 (496 aa).

Residues 2-22 (ELQISSAIIILVATFVASLLI) form a helical; Signal-anchor membrane-spanning segment. Cys-436 lines the heme pocket.

Belongs to the cytochrome P450 family. Heme serves as cofactor.

The protein resides in the endoplasmic reticulum membrane. It carries out the reaction (4S)-limonene + reduced [NADPH--hemoprotein reductase] + O2 = (1S,6R)-isopiperitenol + oxidized [NADPH--hemoprotein reductase] + H2O + H(+). In terms of biological role, hydroxylates both (+)- and (-)-limonene to (+) and (-)-trans-isopiperitenol. In Mentha spicata (Spearmint), this protein is Cytochrome P450 71D95 (CYP71D95).